Reading from the N-terminus, the 519-residue chain is Fatty acid--[acyl-carrier-protein] ligase ScoC (519 aa).

Position 167 (threonine 167) interacts with Mg(2+). Residues isoleucine 216 and threonine 312 each coordinate ATP. Position 313 (glutamate 313) interacts with Mg(2+). ATP-binding residues include aspartate 394 and lysine 411.

Belongs to the ATP-dependent AMP-binding enzyme family. Mg(2+) is required as a cofactor.

It carries out the reaction a medium-chain fatty acid + holo-[ACP] + ATP = a medium-chain fatty acyl-[ACP] + AMP + diphosphate. The catalysed reaction is a medium-chain fatty acid + ATP + H(+) = a medium-chain fatty acyl-AMP + diphosphate. The enzyme catalyses a medium-chain fatty acyl-AMP + holo-[ACP] = a medium-chain fatty acyl-[ACP] + AMP + H(+). It catalyses the reaction octanoate + holo-[ACP] + ATP = octanoyl-[ACP] + AMP + diphosphate. It carries out the reaction octanoate + ATP + H(+) = octanoyl-AMP + diphosphate. The catalysed reaction is octanoyl-AMP + holo-[ACP] = octanoyl-[ACP] + AMP + H(+). The enzyme catalyses a (2E)-enoyl fatty acid + holo-[ACP] + ATP = a (2E)-enoyl-[ACP] + AMP + diphosphate. It catalyses the reaction a (2E)-enoyl fatty acid + ATP + H(+) = a (2E)-2-fatty-enoyl-AMP + diphosphate. It carries out the reaction a (2E)-2-fatty-enoyl-AMP + holo-[ACP] = a (2E)-enoyl-[ACP] + AMP + H(+). The catalysed reaction is (2E)-2-butenoate + holo-[ACP] + ATP = (2E)-butenoyl-[ACP] + AMP + diphosphate. The enzyme catalyses (2E)-2-butenoate + ATP + H(+) = (2E)-but-2-enoyl-AMP + diphosphate. It catalyses the reaction (2E)-but-2-enoyl-AMP + holo-[ACP] = (2E)-butenoyl-[ACP] + AMP + H(+). It carries out the reaction a (3R)-3-isocyanyl-fatty acid + holo-[ACP] + ATP = a (3R)-3-isocyanyl-fatty acyl-[ACP] + AMP + diphosphate. The catalysed reaction is a (3R)-3-isocyanyl-fatty acid + ATP + H(+) = a (3R)-3-isocyanyl-fatty acyl-AMP + diphosphate. The enzyme catalyses a (3R)-3-isocyanyl-fatty acyl-AMP + holo-[ACP] = a (3R)-3-isocyanyl-fatty acyl-[ACP] + AMP + H(+). It catalyses the reaction (3R)-3-isocyanylbutanoate + holo-[ACP] + ATP = (3R)-3-isocyanylbutanoyl-[ACP] + AMP + diphosphate. It carries out the reaction (3R)-3-isocyanylbutanoate + ATP + H(+) = (3R)-3-isocyanylbutanoyl-AMP + diphosphate. The catalysed reaction is (3R)-3-isocyanylbutanoyl-AMP + holo-[ACP] = (3R)-3-isocyanylbutanoyl-[ACP] + AMP + H(+). In terms of biological role, acyl:acyl-carrier protein ligase involved in the biosynthesis of a unique class of isonitrile lipopeptides (INLPs). Shows a strong preference for fatty acids with a short/medium-chain length (C4-C8) in vitro, and accepts alpha,beta-unsaturated fatty acids such as crotonate, which seems to be a physiological substrate. Acts twice during the INLP pathway, catalyzing the activation of crotonate ((2E)-2-butenoate) as well as (3R)-3-isocyanylbutanoate as acyl-adenylates (acyl-AMP), and then the acyl transfer to the dedicated acyl-carrier protein ScoB. The chain is Fatty acid--[acyl-carrier-protein] ligase ScoC from Streptomyces coeruleorubidus.